The following is a 393-amino-acid chain: Chorismate synthase (393 aa).

2 residues coordinate NADP(+): Arg-39 and Arg-45. FMN contacts are provided by residues 133–135 (RSS), 256–257 (NA), Gly-301, 316–320 (KPIPT), and Arg-342.

This sequence belongs to the chorismate synthase family. In terms of assembly, homotetramer. It depends on FMNH2 as a cofactor.

It carries out the reaction 5-O-(1-carboxyvinyl)-3-phosphoshikimate = chorismate + phosphate. It participates in metabolic intermediate biosynthesis; chorismate biosynthesis; chorismate from D-erythrose 4-phosphate and phosphoenolpyruvate: step 7/7. Catalyzes the anti-1,4-elimination of the C-3 phosphate and the C-6 proR hydrogen from 5-enolpyruvylshikimate-3-phosphate (EPSP) to yield chorismate, which is the branch point compound that serves as the starting substrate for the three terminal pathways of aromatic amino acid biosynthesis. This reaction introduces a second double bond into the aromatic ring system. The chain is Chorismate synthase from Lysinibacillus sphaericus (strain C3-41).